The chain runs to 411 residues: GPI-anchor transamidase (411 aa).

The first 22 residues, 1 to 22 (MRIAMHLPLLLLYIFLLPLSGA), serve as a signal peptide directing secretion. Residues 23–376 (NNTDAAHEVI…DIDSNECFFT (354 aa)) are Lumenal-facing. Catalysis depends on residues histidine 157 and cysteine 199. 2 N-linked (GlcNAc...) asparagine glycosylation sites follow: asparagine 256 and asparagine 346. The helical transmembrane segment at 377–397 (SFKQSATIILALIVTILWFML) threads the bilayer. The Cytoplasmic portion of the chain corresponds to 398 to 411 (RGNTAKATYDLYTN).

This sequence belongs to the peptidase C13 family. In terms of assembly, forms a complex with CDC91, GPI16, GPI17 and GAA1. In terms of processing, the disulfide bond between GPI8 and GPI16 is important for normal enzyme activity.

The protein resides in the endoplasmic reticulum membrane. It participates in glycolipid biosynthesis; glycosylphosphatidylinositol-anchor biosynthesis. Functionally, mediates GPI anchoring in the endoplasmic reticulum, by replacing a protein's C-terminal GPI attachment signal peptide with a pre-assembled GPI. During this transamidation reaction, the GPI transamidase forms a carbonyl intermediate with the substrate protein. This chain is GPI-anchor transamidase (GPI8), found in Saccharomyces cerevisiae (strain ATCC 204508 / S288c) (Baker's yeast).